A 128-amino-acid chain; its full sequence is Large-conductance mechanosensitive channel (128 aa).

A run of 2 helical transmembrane segments spans residues phenylalanine 11–glycine 31 and glycine 70–valine 90.

It belongs to the MscL family. In terms of assembly, homopentamer.

The protein localises to the cell membrane. Its function is as follows. Channel that opens in response to stretch forces in the membrane lipid bilayer. May participate in the regulation of osmotic pressure changes within the cell. The protein is Large-conductance mechanosensitive channel of Listeria monocytogenes serotype 4b (strain CLIP80459).